The chain runs to 72 residues: Crustacean hyperglycemic hormone A (72 aa).

At Gln-1 the chain carries Pyrrolidone carboxylic acid. Residue Phe-3 is modified to D-phenylalanine; in form CHHA-II. Disulfide bonds link Cys-7-Cys-43, Cys-23-Cys-39, and Cys-26-Cys-52. Val-72 is subject to Valine amide.

Stereoinversion of L-Phe (in CHHA-I) to D-Phe (in CHHA-II).

It is found in the secreted. Functionally, hormone found in the sinus gland of isopods and decapods which controls the blood sugar level. Has a secretagogue action over the amylase released from the midgut gland. May act as a stress hormone and may be involved in the control of molting and reproduction. This Cherax destructor (Common yabby crayfish) protein is Crustacean hyperglycemic hormone A.